The following is an 841-amino-acid chain: Probable outer membrane usher protein EcpC (841 aa).

The signal sequence occupies residues 1–29 (MPLRRFSPGLKAQFAFGMVFLFVQPDASA).

The protein belongs to the EcpC/MatD family.

In terms of biological role, part of the ecpRABCDE operon, which encodes the E.coli common pilus (ECP). ECP is found in both commensal and pathogenic strains and plays a dual role in early-stage biofilm development and host cell recognition. The chain is Probable outer membrane usher protein EcpC (ecpC) from Escherichia coli O127:H6 (strain E2348/69 / EPEC).